Consider the following 415-residue polypeptide: Glucose-1-phosphate adenylyltransferase (415 aa).

Alpha-D-glucose 1-phosphate contacts are provided by residues Y98, G163, 178–179 (EK), and S189.

It belongs to the bacterial/plant glucose-1-phosphate adenylyltransferase family. In terms of assembly, homotetramer.

It catalyses the reaction alpha-D-glucose 1-phosphate + ATP + H(+) = ADP-alpha-D-glucose + diphosphate. It functions in the pathway glycan biosynthesis; glycogen biosynthesis. Functionally, involved in the biosynthesis of ADP-glucose, a building block required for the elongation reactions to produce glycogen. Catalyzes the reaction between ATP and alpha-D-glucose 1-phosphate (G1P) to produce pyrophosphate and ADP-Glc. This is Glucose-1-phosphate adenylyltransferase from Fervidobacterium nodosum (strain ATCC 35602 / DSM 5306 / Rt17-B1).